The chain runs to 104 residues: Large ribosomal subunit protein bL21c (104 aa).

This sequence belongs to the bacterial ribosomal protein bL21 family. Part of the 50S ribosomal subunit.

Its subcellular location is the plastid. It is found in the chloroplast. In terms of biological role, this protein binds to 23S rRNA. This chain is Large ribosomal subunit protein bL21c, found in Pyropia yezoensis (Susabi-nori).